Reading from the N-terminus, the 341-residue chain is Ketol-acid reductoisomerase (NADP(+)) (341 aa).

The 181-residue stretch at 2-182 (TDIVYDKDAD…GGLRAGGIRT (181 aa)) folds into the KARI N-terminal Rossmann domain. Residues 25–28 (YGSQ), lysine 48, serine 51, serine 53, and 83–86 (DQHQ) contribute to the NADP(+) site. The active site involves histidine 108. Glycine 134 is an NADP(+) binding site. A KARI C-terminal knotted domain is found at 183–328 (TFTEETETDL…RELRKLFAWN (146 aa)). Aspartate 191, glutamate 195, glutamate 227, and glutamate 231 together coordinate Mg(2+). Serine 252 provides a ligand contact to substrate.

This sequence belongs to the ketol-acid reductoisomerase family. The cofactor is Mg(2+).

It carries out the reaction (2R)-2,3-dihydroxy-3-methylbutanoate + NADP(+) = (2S)-2-acetolactate + NADPH + H(+). The catalysed reaction is (2R,3R)-2,3-dihydroxy-3-methylpentanoate + NADP(+) = (S)-2-ethyl-2-hydroxy-3-oxobutanoate + NADPH + H(+). It participates in amino-acid biosynthesis; L-isoleucine biosynthesis; L-isoleucine from 2-oxobutanoate: step 2/4. The protein operates within amino-acid biosynthesis; L-valine biosynthesis; L-valine from pyruvate: step 2/4. Functionally, involved in the biosynthesis of branched-chain amino acids (BCAA). Catalyzes an alkyl-migration followed by a ketol-acid reduction of (S)-2-acetolactate (S2AL) to yield (R)-2,3-dihydroxy-isovalerate. In the isomerase reaction, S2AL is rearranged via a Mg-dependent methyl migration to produce 3-hydroxy-3-methyl-2-ketobutyrate (HMKB). In the reductase reaction, this 2-ketoacid undergoes a metal-dependent reduction by NADPH to yield (R)-2,3-dihydroxy-isovalerate. This chain is Ketol-acid reductoisomerase (NADP(+)), found in Clavibacter michiganensis subsp. michiganensis (strain NCPPB 382).